Here is a 545-residue protein sequence, read N- to C-terminus: Chaperonin GroEL 1 (545 aa).

ATP contacts are provided by residues 30-33 (TLGP), lysine 51, 87-91 (DGTTT), glycine 415, and aspartate 496.

Belongs to the chaperonin (HSP60) family. As to quaternary structure, forms a cylinder of 14 subunits composed of two heptameric rings stacked back-to-back. Interacts with the co-chaperonin GroES.

Its subcellular location is the cytoplasm. It carries out the reaction ATP + H2O + a folded polypeptide = ADP + phosphate + an unfolded polypeptide.. Together with its co-chaperonin GroES, plays an essential role in assisting protein folding. The GroEL-GroES system forms a nano-cage that allows encapsulation of the non-native substrate proteins and provides a physical environment optimized to promote and accelerate protein folding. This chain is Chaperonin GroEL 1, found in Nitrobacter hamburgensis (strain DSM 10229 / NCIMB 13809 / X14).